A 739-amino-acid chain; its full sequence is Elongation factor 2 (739 aa).

Positions 19-261 (RNIRNIGIIA…MVALHVPDPI (243 aa)) constitute a tr-type G domain. GTP contacts are provided by residues 28–35 (AHVDHGKT), 94–98 (DTPGH), and 148–151 (NKID). H603 carries the diphthamide modification.

It belongs to the TRAFAC class translation factor GTPase superfamily. Classic translation factor GTPase family. EF-G/EF-2 subfamily.

The protein localises to the cytoplasm. Its function is as follows. Catalyzes the GTP-dependent ribosomal translocation step during translation elongation. During this step, the ribosome changes from the pre-translocational (PRE) to the post-translocational (POST) state as the newly formed A-site-bound peptidyl-tRNA and P-site-bound deacylated tRNA move to the P and E sites, respectively. Catalyzes the coordinated movement of the two tRNA molecules, the mRNA and conformational changes in the ribosome. This is Elongation factor 2 from Korarchaeum cryptofilum (strain OPF8).